The sequence spans 261 residues: [LysW]-aminoadipate/[LysW]-glutamate kinase (261 aa).

Residues G35–G36, R62, and N166 each bind substrate.

Belongs to the acetylglutamate kinase family. LysZ subfamily.

The protein localises to the cytoplasm. The enzyme catalyses [amino-group carrier protein]-C-terminal-N-(1,4-dicarboxybutan-1-yl)-L-glutamine + ATP = [amino-group carrier protein]-C-terminal-N-(1-carboxy-5-phosphooxy-5-oxopentan-1-yl)-L-glutamine + ADP. The catalysed reaction is [amino-group carrier protein]-C-terminal-gamma-(L-glutamyl)-L-glutamate + ATP = [amino-group carrier protein]-C-terminal-gamma-(5-phospho-L-glutamyl)-L-glutamate + ADP. It functions in the pathway amino-acid biosynthesis; L-lysine biosynthesis via AAA pathway; L-lysine from L-alpha-aminoadipate (Thermus route): step 2/5. The protein operates within amino-acid biosynthesis; L-arginine biosynthesis. Its function is as follows. Involved in both the arginine and lysine biosynthetic pathways. Phosphorylates the LysW-bound precursors glutamate (for arginine biosynthesis), respectively alpha-aminoadipate (for lysine biosynthesis). This is [LysW]-aminoadipate/[LysW]-glutamate kinase from Sulfolobus acidocaldarius (strain ATCC 33909 / DSM 639 / JCM 8929 / NBRC 15157 / NCIMB 11770).